We begin with the raw amino-acid sequence, 91 residues long: Large ribosomal subunit protein eL43 (91 aa).

The C4-type zinc-finger motif lies at 39–60 (CSFCGKEAMKRKATGIWNCAKC).

It belongs to the eukaryotic ribosomal protein eL43 family.

This chain is Large ribosomal subunit protein eL43, found in Caenorhabditis elegans.